A 279-amino-acid chain; its full sequence is Arabinooligosaccharides transport system permease protein AraQ (279 aa).

The next 6 helical transmembrane spans lie at 8–28 (ILSW…VFPL), 79–99 (VWIS…VGYA), 110–130 (FFFL…MLPL), 140–160 (VNTY…VFFF), 184–204 (GIFF…MAIL), and 245–265 (ILLA…IFFQ). The 190-residue stretch at 75–264 (FGNSVWISIV…VPIVILFIFF (190 aa)) folds into the ABC transmembrane type-1 domain.

Belongs to the binding-protein-dependent transport system permease family. MalFG subfamily. As to quaternary structure, the complex is composed of two ATP-binding proteins (MsmX), two transmembrane proteins (AraP and AraQ) and a solute-binding protein (AraN).

It is found in the cell membrane. Its function is as follows. Part of the ABC transporter complex AraNPQ involved in the uptake of arabinooligosaccharides. Responsible for the translocation of the substrate across the membrane. This is Arabinooligosaccharides transport system permease protein AraQ (araQ) from Halalkalibacterium halodurans (strain ATCC BAA-125 / DSM 18197 / FERM 7344 / JCM 9153 / C-125) (Bacillus halodurans).